The chain runs to 369 residues: Phosphate-binding protein PstS 3 (369 aa).

Positions 1–21 (MKLNQFGAAIGLLATGALLSG) are cleaved as a signal peptide. C22 carries N-palmitoyl cysteine lipidation. Residue C22 is the site of S-diacylglycerol cysteine attachment. Phosphate-binding positions include 55-57 (STA), S85, D103, and 190-192 (SGT).

It belongs to the PstS family. In terms of assembly, the complex is composed of two ATP-binding proteins (PstB), two transmembrane proteins (PstC and PstA) and a solute-binding protein (PstS).

The protein localises to the cell membrane. Part of the ABC transporter complex PstSACB involved in phosphate import. The polypeptide is Phosphate-binding protein PstS 3 (pstS2) (Mycobacterium leprae (strain TN)).